The sequence spans 455 residues: MSEQEIWEKVLTLAQEKVSSASYQTFLKDTKLFKLQNEQAIVVTDDDFVANWLKMNYAEIIKAALYEAIGHEIAPVFYTEEELKSLHTSEQKEENQPEQPAKKYTPGVDEAVIGGEQFNTHNTFETFVIGPGNRFPHAASLAVAEAPAKAYNPLFIYGGVGLGKTHLMHAIGHYVLDNNPDAKVIYTSSEKFTNEFIKSIRDNKTERFREKYRNIDVLLIDDIQFIQNKEQTQEEFFHTFNELHQANKQIVISSDRPPKEIAKLEDRLRSRFEWGLIVDITPPDYETRMAILQKKIGEENLNIPTEALTYIANQIQSNIRELEGALTRVLAFSKLQGQPITTELTAEALKDIIQAPKSKKITIQDIQKIVGQYYSVRIEDFSAKKRTKSIAYPRQIAMYLSRELTDFSLPKIGEEFGGRDHTTVIHAHEKIVKDIQNDPTFKQEVENLEKEIRNQ.

The interval 1-74 is domain I, interacts with DnaA modulators; the sequence is MSEQEIWEKV…LYEAIGHEIA (74 aa). The segment at 74-116 is domain II; the sequence is APVFYTEEELKSLHTSEQKEENQPEQPAKKYTPGVDEAVIGGE. A compositionally biased stretch (basic and acidic residues) spans 85–95; sequence SLHTSEQKEEN. Positions 85–104 are disordered; the sequence is SLHTSEQKEENQPEQPAKKY. The segment at 117–333 is domain III, AAA+ region; the sequence is QFNTHNTFET…GALTRVLAFS (217 aa). Positions 161, 163, 164, and 165 each coordinate ATP. Positions 334–455 are domain IV, binds dsDNA; that stretch reads KLQGQPITTE…ENLEKEIRNQ (122 aa).

The protein belongs to the DnaA family. In terms of assembly, oligomerizes as a right-handed, spiral filament on DNA at oriC.

Its subcellular location is the cytoplasm. In terms of biological role, plays an essential role in the initiation and regulation of chromosomal replication. ATP-DnaA binds to the origin of replication (oriC) to initiate formation of the DNA replication initiation complex once per cell cycle. Binds the DnaA box (a 9 base pair repeat at the origin) and separates the double-stranded (ds)DNA. Forms a right-handed helical filament on oriC DNA; dsDNA binds to the exterior of the filament while single-stranded (ss)DNA is stabiized in the filament's interior. The ATP-DnaA-oriC complex binds and stabilizes one strand of the AT-rich DNA unwinding element (DUE), permitting loading of DNA polymerase. After initiation quickly degrades to an ADP-DnaA complex that is not apt for DNA replication. Binds acidic phospholipids. The sequence is that of Chromosomal replication initiator protein DnaA from Staphylococcus saprophyticus subsp. saprophyticus (strain ATCC 15305 / DSM 20229 / NCIMB 8711 / NCTC 7292 / S-41).